The following is a 373-amino-acid chain: tRNA 2-selenouridine synthase (373 aa).

Positions Phe12 to Glu136 constitute a Rhodanese domain. Catalysis depends on Cys95, which acts as the S-selanylcysteine intermediate.

It belongs to the SelU family. In terms of assembly, monomer.

It carries out the reaction 5-methylaminomethyl-2-thiouridine(34) in tRNA + selenophosphate + (2E)-geranyl diphosphate + H2O + H(+) = 5-methylaminomethyl-2-selenouridine(34) in tRNA + (2E)-thiogeraniol + phosphate + diphosphate. It catalyses the reaction 5-methylaminomethyl-2-thiouridine(34) in tRNA + (2E)-geranyl diphosphate = 5-methylaminomethyl-S-(2E)-geranyl-thiouridine(34) in tRNA + diphosphate. The catalysed reaction is 5-methylaminomethyl-S-(2E)-geranyl-thiouridine(34) in tRNA + selenophosphate + H(+) = 5-methylaminomethyl-2-(Se-phospho)selenouridine(34) in tRNA + (2E)-thiogeraniol. The enzyme catalyses 5-methylaminomethyl-2-(Se-phospho)selenouridine(34) in tRNA + H2O = 5-methylaminomethyl-2-selenouridine(34) in tRNA + phosphate. Functionally, involved in the post-transcriptional modification of the uridine at the wobble position (U34) of tRNA(Lys), tRNA(Glu) and tRNA(Gln). Catalyzes the conversion of 2-thiouridine (S2U-RNA) to 2-selenouridine (Se2U-RNA). Acts in a two-step process involving geranylation of 2-thiouridine (S2U) to S-geranyl-2-thiouridine (geS2U) and subsequent selenation of the latter derivative to 2-selenouridine (Se2U) in the tRNA chain. The chain is tRNA 2-selenouridine synthase from Ectopseudomonas mendocina (strain ymp) (Pseudomonas mendocina).